We begin with the raw amino-acid sequence, 271 residues long: Gap junction beta-5 protein (271 aa).

Residues 1-20 (MNWSVFEGLLSGVNKYSTAF) are Cytoplasmic-facing. A helical membrane pass occupies residues 21-40 (GRIWLSLVFVFRVLVYLVTA). Residues 41 to 75 (ERVWGDDQKDFDCNTRQPGCTNVCYDEFFPVSHVR) lie on the Extracellular side of the membrane. The helical transmembrane segment at 76-98 (LWALQLILVTCPSLLVVMHVAYR) threads the bilayer. Over 99–124 (KAREKKYQQEVGKGYLYPNPGKKRGG) the chain is Cytoplasmic. A helical membrane pass occupies residues 125–147 (LWWTYVCSLLFKATIDIIFLYLF). The Extracellular segment spans residues 148-182 (HAFYPRYTLPSMVKCHSAPCPNTVDCFIAKPSEKN). A helical transmembrane segment spans residues 183–205 (IFIVFMLVTAIVCILLNLVELLY). The Cytoplasmic segment spans residues 206–271 (LVIKRCSECA…PRAHVKKTIL (66 aa)). The tract at residues 217 to 237 (AKRPPTAHAKNDPNWANPSSK) is disordered.

The protein belongs to the connexin family. Beta-type (group I) subfamily. In terms of assembly, a connexon is composed of a hexamer of connexins. Expressed in skin.

The protein resides in the cell membrane. It is found in the cell junction. Its subcellular location is the gap junction. Functionally, one gap junction consists of a cluster of closely packed pairs of transmembrane channels, the connexons, through which materials of low MW diffuse from one cell to a neighboring cell. The protein is Gap junction beta-5 protein (Gjb5) of Rattus norvegicus (Rat).